The chain runs to 437 residues: MAEAEEDCHSEAVREGDDDDENESPAETDLQAQLQRFRAQWMFELAPGGGSGNLESRPCRAARGSLLRAADTRGKQELAKEEKARELFLKAVEEEQNGALYEAIKFYRRAMQLVPDIEFKITYTRSPDGDGVGNSYIEDTDDDSKMADLLSYFQQQLTFQESVLKLCQPELESSQTHISALPMEVLMYVFRWVVSSDLDLRSLEQLSQVCRGFYICARDPEIWRLACLKVWGRSCIKLVPYTSWREMFLERPRVRFDGVYISKTTYIRQGEQSLDGFYRAWHQVEYYRYVRFFPDGHVMMLTTPEEPQSIVPRLRTRNTRTDAILLGHYRLSQDTDNQTKVFAVITKKKEEKALDHKYRYFRRAPVQEADQNFHVGLQLCSSGHQSFNKLIWIHHSCHITYKSTGETAVTAFEIDKMYTPLLFARVRSYTAFSERPL.

Residues 1–29 are disordered; it reads MAEAEEDCHSEAVREGDDDDENESPAETD. Residues 16–26 show a composition bias toward acidic residues; the sequence is GDDDDENESPA. The TPR repeat unit spans residues 84-117; that stretch reads ARELFLKAVEEEQNGALYEAIKFYRRAMQLVPDI. S126 bears the Phosphoserine mark. Residues 175 to 226 form the F-box domain; sequence QTHISALPMEVLMYVFRWVVSSDLDLRSLEQLSQVCRGFYICARDPEIWRLA.

In terms of assembly, part of the SCF (SKP1-CUL1-F-box) E3 ubiquitin-protein ligase complex SCF(FBXO9) composed of CUL1, SKP1, RBX1 and FBXO9. Interacts with TTI1 and TELO2; when TTI1 and TELO2 are phosphorylated by CK2.

Its subcellular location is the cytoplasm. Its pathway is protein modification; protein ubiquitination. In terms of biological role, substrate recognition component of a SCF (SKP1-CUL1-F-box protein) E3 ubiquitin-protein ligase complex which mediates the ubiquitination and subsequent proteasomal degradation of target proteins and plays a role in several biological processes such as cell cycle, cell proliferation, or maintenance of chromosome stability. Ubiquitinates mTORC1-bound TTI1 and TELO2 when they are phosphorylated by CK2 following growth factor deprivation, leading to their degradation. In contrast, does not mediate ubiquitination of TTI1 and TELO2 when they are part of the mTORC2 complex. As a consequence, mTORC1 is inactivated to restrain cell growth and protein translation, while mTORC2 is the activated due to the relief of feedback inhibition by mTORC1. Plays a role in maintaining epithelial cell survival by regulating the turn-over of chromatin modulator PRMT4 through ubiquitination and degradation by the proteasomal pathway. Also regulates PPARgamma stability by facilitating PPARgamma/PPARG ubiquitination and thereby plays a role in adipocyte differentiation. This chain is F-box only protein 9 (FBXO9), found in Bos taurus (Bovine).